We begin with the raw amino-acid sequence, 961 residues long: Integrator complex subunit 7 (961 aa).

The span at 937-955 shows a compositional bias: low complexity; that stretch reads QVRLQQQQGQPPSQQQQQR. Positions 937–961 are disordered; sequence QVRLQQQQGQPPSQQQQQRTAYSRF.

The protein belongs to the Integrator subunit 7 family. As to quaternary structure, component of the Integrator complex, composed of core subunits INTS1, INTS2, INTS3, INTS4, INTS5, INTS6, INTS7, INTS8, INTS9/RC74, INTS10, INTS11/CPSF3L, INTS12, INTS13, INTS14 and INTS15. The core complex associates with protein phosphatase 2A subunits PPP2CA and PPP2R1A, to form the Integrator-PP2A (INTAC) complex.

It localises to the nucleus. Its subcellular location is the chromosome. The protein localises to the cytoplasm. Component of the integrator complex, a multiprotein complex that terminates RNA polymerase II (Pol II) transcription in the promoter-proximal region of genes. The integrator complex provides a quality checkpoint during transcription elongation by driving premature transcription termination of transcripts that are unfavorably configured for transcriptional elongation: the complex terminates transcription by (1) catalyzing dephosphorylation of the C-terminal domain (CTD) of Pol II subunit POLR2A/RPB1 and SUPT5H/SPT5, (2) degrading the exiting nascent RNA transcript via endonuclease activity and (3) promoting the release of Pol II from bound DNA. The integrator complex is also involved in terminating the synthesis of non-coding Pol II transcripts, such as enhancer RNAs (eRNAs), small nuclear RNAs (snRNAs), telomerase RNAs and long non-coding RNAs (lncRNAs). This Gallus gallus (Chicken) protein is Integrator complex subunit 7 (INTS7).